Here is a 251-residue protein sequence, read N- to C-terminus: tRNA pseudouridine synthase A 1 (251 aa).

Asp-52 functions as the Nucleophile in the catalytic mechanism. Residue Tyr-110 coordinates substrate.

Belongs to the tRNA pseudouridine synthase TruA family. Homodimer.

It catalyses the reaction uridine(38/39/40) in tRNA = pseudouridine(38/39/40) in tRNA. Its function is as follows. Formation of pseudouridine at positions 38, 39 and 40 in the anticodon stem and loop of transfer RNAs. The polypeptide is tRNA pseudouridine synthase A 1 (Desulfotalea psychrophila (strain LSv54 / DSM 12343)).